The primary structure comprises 65 residues: Large ribosomal subunit protein bL35 (65 aa).

Belongs to the bacterial ribosomal protein bL35 family.

In Synechococcus sp. (strain CC9605), this protein is Large ribosomal subunit protein bL35.